Here is a 480-residue protein sequence, read N- to C-terminus: ATP synthase subunit beta, chloroplastic (480 aa).

Position 161–168 (161–168 (GGAGVGKT)) interacts with ATP.

Belongs to the ATPase alpha/beta chains family. As to quaternary structure, F-type ATPases have 2 components, CF(1) - the catalytic core - and CF(0) - the membrane proton channel. CF(1) has five subunits: alpha(3), beta(3), gamma(1), delta(1), epsilon(1). CF(0) has four main subunits: a(1), b(1), b'(1) and c(9-12).

The protein localises to the plastid. It localises to the chloroplast thylakoid membrane. It carries out the reaction ATP + H2O + 4 H(+)(in) = ADP + phosphate + 5 H(+)(out). Functionally, produces ATP from ADP in the presence of a proton gradient across the membrane. The catalytic sites are hosted primarily by the beta subunits. This is ATP synthase subunit beta, chloroplastic from Tetradesmus obliquus (Green alga).